Here is a 190-residue protein sequence, read N- to C-terminus: MSGLRPALSTFLFLLLITGGVYPLLTTALGQWWFPWQANGSLIREGDTVRGSALIGQNFTGNGYFHGRPSATAEMPYNPQASGGSNLAVSNPELDKQIAARVAALRAANPNASTNVPVELVTASASGLDNNITPQAAAWQIPRVAKARNLSVEQLTQLIAKYSQQPLVKYIGQPVVNIVELNLALDKLDE.

A helical transmembrane segment spans residues 10-30 (TFLFLLLITGGVYPLLTTALG).

It belongs to the KdpC family. As to quaternary structure, the system is composed of three essential subunits: KdpA, KdpB and KdpC.

It is found in the cell inner membrane. Its function is as follows. Part of the high-affinity ATP-driven potassium transport (or Kdp) system, which catalyzes the hydrolysis of ATP coupled with the electrogenic transport of potassium into the cytoplasm. This subunit acts as a catalytic chaperone that increases the ATP-binding affinity of the ATP-hydrolyzing subunit KdpB by the formation of a transient KdpB/KdpC/ATP ternary complex. The protein is Potassium-transporting ATPase KdpC subunit of Escherichia coli O81 (strain ED1a).